The following is a 268-amino-acid chain: Shikimate dehydrogenase (NADP(+)) (268 aa).

Residues 13–15 and threonine 60 contribute to the shikimate site; that span reads SLS. The active-site Proton acceptor is lysine 64. Glutamate 76 contacts NADP(+). Asparagine 85 and aspartate 100 together coordinate shikimate. Residues 124-128, 148-153, and isoleucine 209 each bind NADP(+); these read GAGGA and NRTMAR. Tyrosine 211 lines the shikimate pocket. Glycine 232 is an NADP(+) binding site.

It belongs to the shikimate dehydrogenase family. Homodimer.

It catalyses the reaction shikimate + NADP(+) = 3-dehydroshikimate + NADPH + H(+). It functions in the pathway metabolic intermediate biosynthesis; chorismate biosynthesis; chorismate from D-erythrose 4-phosphate and phosphoenolpyruvate: step 4/7. Involved in the biosynthesis of the chorismate, which leads to the biosynthesis of aromatic amino acids. Catalyzes the reversible NADPH linked reduction of 3-dehydroshikimate (DHSA) to yield shikimate (SA). The polypeptide is Shikimate dehydrogenase (NADP(+)) (Staphylococcus aureus (strain MSSA476)).